The sequence spans 327 residues: Biotin synthase (327 aa).

Residues 52 to 279 enclose the Radical SAM core domain; the sequence is NAIQRSTLLS…TSWVRLSAGR (228 aa). Residues Cys-67, Cys-71, and Cys-74 each coordinate [4Fe-4S] cluster. Positions 111, 142, 202, and 274 each coordinate [2Fe-2S] cluster.

It belongs to the radical SAM superfamily. Biotin synthase family. In terms of assembly, homodimer. The cofactor is [4Fe-4S] cluster. [2Fe-2S] cluster serves as cofactor.

The catalysed reaction is (4R,5S)-dethiobiotin + (sulfur carrier)-SH + 2 reduced [2Fe-2S]-[ferredoxin] + 2 S-adenosyl-L-methionine = (sulfur carrier)-H + biotin + 2 5'-deoxyadenosine + 2 L-methionine + 2 oxidized [2Fe-2S]-[ferredoxin]. It participates in cofactor biosynthesis; biotin biosynthesis; biotin from 7,8-diaminononanoate: step 2/2. In terms of biological role, catalyzes the conversion of dethiobiotin (DTB) to biotin by the insertion of a sulfur atom into dethiobiotin via a radical-based mechanism. This Dechloromonas aromatica (strain RCB) protein is Biotin synthase.